Here is a 42-residue protein sequence, read N- to C-terminus: uncharacterized protein (42 aa).

Residues 15–37 (PLILAVDCAIIIPNTNFIHSFLI) form a helical membrane-spanning segment.

The protein resides in the membrane. This is an uncharacterized protein from Dictyostelium discoideum (Social amoeba).